The primary structure comprises 218 residues: Autophagy-related protein 101 (218 aa).

The interval 152–156 (IINIV) is important for interaction with ATG13.

This sequence belongs to the ATG101 family. In terms of assembly, interacts with ATG13. Associates with a complex composed of ATG13, ULK1 and RB1CC1; the association with this complex requires the presence of ATG13.

The protein localises to the cytoplasm. It is found in the preautophagosomal structure. Its function is as follows. Autophagy factor required for autophagosome formation. Stabilizes ATG13, protecting it from proteasomal degradation. This is Autophagy-related protein 101 (ATG101) from Homo sapiens (Human).